Here is a 2556-residue protein sequence, read N- to C-terminus: Ubiquitin carboxyl-terminal hydrolase 9Y (2556 aa).

Polar residues predominate over residues 1-33 (MTITTRGSPVGENESQGQTSDGQPQPSFQQNQI). The tract at residues 1–68 (MTITTRGSPV…QHEEEDPSFP (68 aa)) is disordered. Over residues 34 to 44 (SSSDSSNETSP) the composition is skewed to low complexity. Residue S587 is modified to Phosphoserine. The residue at position 589 (T589) is a Phosphothreonine. The tract at residues 971 to 999 (NMPSSPDSSSDSSAGPPGNHSHNNYRDVS) is disordered. A compositionally biased stretch (low complexity) spans 973-983 (PSSPDSSSDSS). In terms of domain architecture, USP spans 1559-1958 (VGLKNAGATC…NAYILFYERM (400 aa)). The Nucleophile role is filled by C1568. Residues C1729, H1731, C1773, and C1776 each coordinate Zn(2+). Catalysis depends on H1881, which acts as the Proton acceptor. At S2447 the chain carries Phosphoserine. Residues 2513-2556 (QNYVPEQPFSGPASHHLNNPQKNDKPQETHESNEEISSCLIKDQ) form a disordered region. The span at 2534 to 2545 (KNDKPQETHESN) shows a compositional bias: basic and acidic residues. Position 2549 is a phosphoserine (S2549).

This sequence belongs to the peptidase C19 family.

The catalysed reaction is Thiol-dependent hydrolysis of ester, thioester, amide, peptide and isopeptide bonds formed by the C-terminal Gly of ubiquitin (a 76-residue protein attached to proteins as an intracellular targeting signal).. It functions in the pathway protein modification; protein ubiquitination. Deubiquitinase that mediates deubiquitination of target proteins. May stabilize target proteins that are important for male germ cell development. The chain is Ubiquitin carboxyl-terminal hydrolase 9Y from Mus musculus (Mouse).